Reading from the N-terminus, the 221-residue chain is Endo-1,4-beta-xylanase 11A (221 aa).

An N-terminal signal peptide occupies residues 1–18; sequence MKFATVLAFATAAGAAFA. One can recognise a GH11 domain in the interval 23–220; it reads SSETTEAGQL…GTGSASMSVS (198 aa). The active-site Nucleophile is E111. N117 carries N-linked (GlcNAc...) asparagine glycosylation. E207 (proton donor) is an active-site residue.

It belongs to the glycosyl hydrolase 11 (cellulase G) family.

Its subcellular location is the secreted. The catalysed reaction is Endohydrolysis of (1-&gt;4)-beta-D-xylosidic linkages in xylans.. Its pathway is glycan degradation; xylan degradation. Functionally, endo-1,4-beta-xylanase involved in the hydrolysis of xylan, a major structural heterogeneous polysaccharide found in plant biomass representing the second most abundant polysaccharide in the biosphere, after cellulose. The polypeptide is Endo-1,4-beta-xylanase 11A (XYN11A) (Mycosarcoma maydis (Corn smut fungus)).